Reading from the N-terminus, the 570-residue chain is Molecular chaperone MKKS (570 aa).

Residue 192–199 (GHIILGKS) coordinates ATP. The segment at 198–370 (KSLIVPLKGQ…FHLIPNEATI (173 aa)) is substrate-binding apical domain.

This sequence belongs to the TCP-1 chaperonin family. As to quaternary structure, component of a complex composed at least of MKKS, BBS10, BBS12, TCP1, CCT2, CCT3, CCT4, CCT5 and CCT8. Interacts with STUB1. Interacts with BBS2 (via coiled coil domain). Interacts with CCDC28B. Interacts with BBS12. Interacts with SMARCC1, a component of the SWI/SNF complexes; the interaction takes place predominantly in the cytoplasm and may modulate SMARCC1 location. Interacts with DLEC1. Widely expressed in adult and fetal tissues.

The protein resides in the cytoplasm. Its subcellular location is the cytoskeleton. It is found in the microtubule organizing center. The protein localises to the centrosome. It localises to the cytosol. The protein resides in the nucleus. In terms of biological role, probable molecular chaperone that assists the folding of proteins upon ATP hydrolysis. Plays a role in the assembly of BBSome, a complex involved in ciliogenesis regulating transports vesicles to the cilia. May play a role in protein processing in limb, cardiac and reproductive system development. May play a role in cytokinesis. The chain is Molecular chaperone MKKS from Homo sapiens (Human).